We begin with the raw amino-acid sequence, 100 residues long: Aspartyl/glutamyl-tRNA(Asn/Gln) amidotransferase subunit C (100 aa).

Belongs to the GatC family. Heterotrimer of A, B and C subunits.

It catalyses the reaction L-glutamyl-tRNA(Gln) + L-glutamine + ATP + H2O = L-glutaminyl-tRNA(Gln) + L-glutamate + ADP + phosphate + H(+). The catalysed reaction is L-aspartyl-tRNA(Asn) + L-glutamine + ATP + H2O = L-asparaginyl-tRNA(Asn) + L-glutamate + ADP + phosphate + 2 H(+). Allows the formation of correctly charged Asn-tRNA(Asn) or Gln-tRNA(Gln) through the transamidation of misacylated Asp-tRNA(Asn) or Glu-tRNA(Gln) in organisms which lack either or both of asparaginyl-tRNA or glutaminyl-tRNA synthetases. The reaction takes place in the presence of glutamine and ATP through an activated phospho-Asp-tRNA(Asn) or phospho-Glu-tRNA(Gln). This is Aspartyl/glutamyl-tRNA(Asn/Gln) amidotransferase subunit C from Streptococcus equi subsp. zooepidemicus (strain MGCS10565).